The chain runs to 722 residues: Bifunctional UDP-N-acetylglucosamine 2-epimerase/N-acetylmannosamine kinase (722 aa).

UDP is bound by residues Arg-19, Ser-23, Arg-113, His-220, and Asn-253. Residues Lys-259, Glu-271, Lys-280, and His-281 each contribute to the CMP-N-acetyl-beta-neuraminate site. Positions 282, 301, 302, 307, and 321 each coordinate UDP. Positions 406–722 (TLSALAVDLG…VLDYTTRRIH (317 aa)) are N-acetylmannosamine kinase. A Mg(2+)-binding site is contributed by Asp-413. An an N-acyl-D-mannosamine 6-phosphate-binding site is contributed by Gly-416. Residues Thr-417, Asn-418, and Arg-420 each coordinate ADP. Gly-476, Arg-477, Thr-489, Asn-516, Asp-517, and Gly-545 together coordinate an N-acyl-D-mannosamine 6-phosphate. An N-acyl-D-mannosamine-binding residues include Gly-476, Arg-477, Thr-489, Asn-516, and Asp-517. Residue Asp-517 is part of the active site. Positions 566 and 569 each coordinate an N-acyl-D-mannosamine. His-569 contacts an N-acyl-D-mannosamine 6-phosphate. Residues His-569, Cys-579, Cys-581, and Cys-586 each coordinate Zn(2+). Residue Glu-588 coordinates an N-acyl-D-mannosamine 6-phosphate. Glu-588 contacts an N-acyl-D-mannosamine.

In the N-terminal section; belongs to the UDP-N-acetylglucosamine 2-epimerase family. It in the C-terminal section; belongs to the ROK (NagC/XylR) family. As to quaternary structure, homodimer. Homotetramer. Homohexamer. The hexameric form exhibits both enzyme activities, whereas the dimeric form only catalyzes the phosphorylation of N-acyl-D-mannosamine. In terms of processing, phosphorylated. Phosphorylation by PKC activates the UDP-N-acetylglucosamine 2-epimerase activity. As to expression, widely expressed. Highest expression is observed in liver.

It is found in the cytoplasm. The protein localises to the cytosol. The enzyme catalyses UDP-N-acetyl-alpha-D-glucosamine + H2O = aldehydo-N-acetyl-D-mannosamine + UDP + H(+). It carries out the reaction an N-acyl-D-mannosamine + ATP = an N-acyl-D-mannosamine 6-phosphate + ADP + H(+). The protein operates within amino-sugar metabolism; N-acetylneuraminate biosynthesis. Its activity is regulated as follows. The UDP-N-acetylglucosamine 2-epimerase activity, in contrast to the N-acetylmannosamine kinase activity, exhibits allosteric regulation by cytidine monophosphate-N-acetylneuraminic acid (CMP-Neu5Ac), the end product of neuraminic acid biosynthesis. Moreover, the activity is contingent upon the oligomeric state of the enzyme. The monomeric form is inactive, while the dimeric form selectively catalyzes the phosphorylation of N-acetylmannosamine. The hexameric form, on the other hand, demonstrates full proficiency in both enzyme activities. Furthermore, the UDP-N-acetylglucosamine 2-epimerase activity is increased by PKC-mediated phosphorylation. Bifunctional enzyme that possesses both UDP-N-acetylglucosamine 2-epimerase and N-acetylmannosamine kinase activities, and serves as the initiator of the biosynthetic pathway leading to the production of N-acetylneuraminic acid (NeuAc), a critical precursor in the synthesis of sialic acids. By catalyzing this pivotal and rate-limiting step in sialic acid biosynthesis, this enzyme assumes a pivotal role in governing the regulation of cell surface sialylation. Sialic acids represent a category of negatively charged sugars that reside on the surface of cells as terminal components of glycoconjugates and mediate important functions in various cellular processes, including cell adhesion, signal transduction, and cellular recognition. This chain is Bifunctional UDP-N-acetylglucosamine 2-epimerase/N-acetylmannosamine kinase, found in Rattus norvegicus (Rat).